Reading from the N-terminus, the 467-residue chain is Ribulose bisphosphate carboxylase large chain (467 aa).

The propeptide occupies 1 to 2 (MS). At proline 3 the chain carries N-acetylproline. The residue at position 14 (lysine 14) is an N6,N6,N6-trimethyllysine. Substrate-binding residues include asparagine 123 and threonine 173. Lysine 175 functions as the Proton acceptor in the catalytic mechanism. Residue lysine 177 coordinates substrate. Mg(2+) is bound by residues lysine 201, aspartate 203, and glutamate 204. Lysine 201 carries the post-translational modification N6-carboxylysine. Residue histidine 294 is the Proton acceptor of the active site. Arginine 295, histidine 327, and serine 379 together coordinate substrate.

Belongs to the RuBisCO large chain family. Type I subfamily. In terms of assembly, heterohexadecamer of 8 large chains and 8 small chains; disulfide-linked. The disulfide link is formed within the large subunit homodimers. It depends on Mg(2+) as a cofactor. Post-translationally, the disulfide bond which can form in the large chain dimeric partners within the hexadecamer appears to be associated with oxidative stress and protein turnover.

The protein localises to the plastid. It localises to the chloroplast. The catalysed reaction is 2 (2R)-3-phosphoglycerate + 2 H(+) = D-ribulose 1,5-bisphosphate + CO2 + H2O. It carries out the reaction D-ribulose 1,5-bisphosphate + O2 = 2-phosphoglycolate + (2R)-3-phosphoglycerate + 2 H(+). Functionally, ruBisCO catalyzes two reactions: the carboxylation of D-ribulose 1,5-bisphosphate, the primary event in carbon dioxide fixation, as well as the oxidative fragmentation of the pentose substrate in the photorespiration process. Both reactions occur simultaneously and in competition at the same active site. This chain is Ribulose bisphosphate carboxylase large chain, found in Phoenix reclinata (Senegal date palm).